The chain runs to 587 residues: Sedolisin (587 aa).

An N-terminal signal peptide occupies residues 1–32 (MKSSAAKQTVLCLNRYAVVALPLAIASFAAFG). Positions 33-215 (ASPASTLWAP…VGERSAAKTL (183 aa)) are cleaved as a propeptide — removed in mature form. Residues 219-583 (TAKGHNPTEF…AKLSAYIRSN (365 aa)) enclose the Peptidase S53 domain. The tract at residues 276–295 (TIQTGSSNGDYSDDQQGQGE) is disordered. Catalysis depends on charge relay system residues E295 and D299. A disulfide bridge connects residues C352 and C391. The active-site Charge relay system is S502. Positions 543, 544, 559, 561, and 563 each coordinate Ca(2+). The propeptide at 586-587 (GH) is removed in mature form.

Requires Ca(2+) as cofactor. In terms of processing, autocatalytically processed.

Its subcellular location is the periplasm. The enzyme catalyses Hydrolysis of the B chain of insulin at 13-Glu-|-Ala-14, 15-Leu-|-Tyr-16 and 25-Phe-|-Tyr-26 and angiotensin I at 4-Tyr-|-Ile-5. A good synthetic substrate is Lys-Pro-Ile-Glu-Phe-|-Phe(NO2)-Arg-Leu.. Inhibited by 1,2-epoxy-3-(p-nitrophenoxy)propane (EPNP), but not by carboxyl proteinase inhibitors, such as pepstatin, pepstatin Ac (S-PI) and diazoacetyl-DL-norleucine methyl ester (DAN). Inhibited by tyrostatin, pseudo-tyrostatin, AcIPF, AcIAF, chymostatin and pseudo-iodotyrostatin. Pepstatin-insensitive serine-carboxyl proteinase. In vitro can hydrolyze various synthetic peptides. Also shows activity on acid-denatured hemoglobin and on casein. The sequence is that of Sedolisin (pcp) from Pseudomonas sp. (strain 101) (Achromobacter parvulus T1).